Here is a 98-residue protein sequence, read N- to C-terminus: DNA-binding protein Fis (98 aa).

The H-T-H motif DNA-binding region spans 74-93 (QTRAATMLGINRGTLRKKLK).

This sequence belongs to the transcriptional regulatory Fis family. As to quaternary structure, homodimer.

In terms of biological role, activates ribosomal RNA transcription. Plays a direct role in upstream activation of rRNA promoters. This Haemophilus ducreyi (strain 35000HP / ATCC 700724) protein is DNA-binding protein Fis.